We begin with the raw amino-acid sequence, 126 residues long: Large ribosomal subunit protein bL12c (126 aa).

The protein belongs to the bacterial ribosomal protein bL12 family. Homodimer. Part of the ribosomal stalk of the 50S ribosomal subunit. Forms a multimeric L10(L12)X complex, where L10 forms an elongated spine to which 2 to 4 L12 dimers bind in a sequential fashion. Binds GTP-bound translation factors.

Its subcellular location is the plastid. The protein resides in the cyanelle. In terms of biological role, forms part of the ribosomal stalk which helps the ribosome interact with GTP-bound translation factors. Is thus essential for accurate translation. This is Large ribosomal subunit protein bL12c from Cyanophora paradoxa.